The primary structure comprises 274 residues: Large ribosomal subunit protein uL2cz/uL2cy (274 aa).

The tract at residues 225–274 (PVDHPHGGGEGRAPIGRKKPVTPWGYPALGRRSRKRKKYSDNLILRRRTK) is disordered.

This sequence belongs to the universal ribosomal protein uL2 family. As to quaternary structure, part of the 50S ribosomal subunit.

The protein localises to the plastid. The protein resides in the chloroplast. The sequence is that of Large ribosomal subunit protein uL2cz/uL2cy (rpl2-A) from Lotus japonicus (Lotus corniculatus var. japonicus).